We begin with the raw amino-acid sequence, 244 residues long: Exosome complex component Rrp41 (244 aa).

Belongs to the RNase PH family. Rrp41 subfamily. Component of the archaeal exosome complex. Forms a hexameric ring-like arrangement composed of 3 Rrp41-Rrp42 heterodimers. The hexameric ring associates with a trimer of Rrp4 and/or Csl4 subunits.

Its subcellular location is the cytoplasm. Catalytic component of the exosome, which is a complex involved in RNA degradation. Has 3'-&gt;5' exoribonuclease activity. Can also synthesize heteromeric RNA-tails. This chain is Exosome complex component Rrp41, found in Nitrosopumilus maritimus (strain SCM1).